A 607-amino-acid chain; its full sequence is MNLQEMNARKEKIRNFSIIAHIDHGKSTLADRILEQTETVSKREMQAQLLDSMDLERERGITIKLNAIELNYKAKDGETYIFHLIDTPGHVDFTYEVSRSLAACEGAILVVDAAQGIEAQTLANVYLALDNDLEILPVINKIDLPAADPEMVRQEIEDVIGLDASEAILASAKAGIGIEEILEQIVEKVPAPQGEVDAPLKALIFDSVYDAYRGVILQIRVIDGSLKVGDRIQLMSNGKEFDVTEVGIFTPKAVSRDFLMAGDVGYVAASIKTVADTRVGDTVTLASNPATEALKGYKEMNPMVFAGIYPIESNKFNDLREALEKLQLNDASLRFEPETSQALGFGFRCGFLGLLHMDVIQERLEREFGIDLIMTAPSVVYHINTTDGETLEVANPSEFPDPTRIENIEEPFVKAQIMVPNDFVGPVMELAQRKRGIFLTMDYLDANRVNIIYNIPLSEIVFDFFDKLKSSTKGYASFDYEISDYRPSNLVKMDILLNAEKVDALSFIVHKDFAFERGKVIVEKLKKLIPRQQFEVPIQATIGNKIVARSDIKALRKNVLAKCYGGDISRKRKLLEKQKAGKKRMKAIGSVEVPQEAFLSVLSMDEE.

In terms of domain architecture, tr-type G spans 11–193 (EKIRNFSIIA…QIVEKVPAPQ (183 aa)). GTP-binding positions include 23–28 (DHGKST) and 140–143 (NKID).

It belongs to the TRAFAC class translation factor GTPase superfamily. Classic translation factor GTPase family. LepA subfamily.

It is found in the cell membrane. The catalysed reaction is GTP + H2O = GDP + phosphate + H(+). Functionally, required for accurate and efficient protein synthesis under certain stress conditions. May act as a fidelity factor of the translation reaction, by catalyzing a one-codon backward translocation of tRNAs on improperly translocated ribosomes. Back-translocation proceeds from a post-translocation (POST) complex to a pre-translocation (PRE) complex, thus giving elongation factor G a second chance to translocate the tRNAs correctly. Binds to ribosomes in a GTP-dependent manner. The polypeptide is Elongation factor 4 (Lactococcus lactis subsp. lactis (strain IL1403) (Streptococcus lactis)).